Consider the following 518-residue polypeptide: Probable bifunctional methylthioribulose-1-phosphate dehydratase/enolase-phosphatase E1 (518 aa).

A methylthioribulose-1-phosphate dehydratase region spans residues 1–247 (MAAAPPAVAV…AIKLHQIGLD (247 aa)). Cys-119 provides a ligand contact to substrate. Residues His-137 and His-139 each coordinate Zn(2+). Glu-162 acts as the Proton donor/acceptor; for methylthioribulose-1-phosphate dehydratase activity in catalysis. His-212 is a Zn(2+) binding site. The segment at 279 to 518 (IVLDIEGTTT…FKTITSFAEI (240 aa)) is enolase-phosphatase E1. Mg(2+) is bound by residues Asp-282 and Glu-284. Substrate is bound by residues 417 to 418 (SS) and Lys-451. Mg(2+) is bound at residue Asp-477.

This sequence in the N-terminal section; belongs to the aldolase class II family. MtnB subfamily. The protein in the C-terminal section; belongs to the HAD-like hydrolase superfamily. MasA/MtnC family. Zn(2+) is required as a cofactor. It depends on Mg(2+) as a cofactor.

The catalysed reaction is 5-(methylsulfanyl)-D-ribulose 1-phosphate = 5-methylsulfanyl-2,3-dioxopentyl phosphate + H2O. The enzyme catalyses 5-methylsulfanyl-2,3-dioxopentyl phosphate + H2O = 1,2-dihydroxy-5-(methylsulfanyl)pent-1-en-3-one + phosphate. It functions in the pathway amino-acid biosynthesis; L-methionine biosynthesis via salvage pathway; L-methionine from S-methyl-5-thio-alpha-D-ribose 1-phosphate: step 2/6. It participates in amino-acid biosynthesis; L-methionine biosynthesis via salvage pathway; L-methionine from S-methyl-5-thio-alpha-D-ribose 1-phosphate: step 3/6. Its pathway is amino-acid biosynthesis; L-methionine biosynthesis via salvage pathway; L-methionine from S-methyl-5-thio-alpha-D-ribose 1-phosphate: step 4/6. The sequence is that of Probable bifunctional methylthioribulose-1-phosphate dehydratase/enolase-phosphatase E1 from Populus trichocarpa (Western balsam poplar).